The sequence spans 147 residues: UPF0306 protein YhbP (147 aa).

This sequence belongs to the UPF0306 family.

The chain is UPF0306 protein YhbP from Salmonella schwarzengrund (strain CVM19633).